The following is a 364-amino-acid chain: MMMMMRRAFRHLARQQRRPLSHVPESAVYGGPRPQDVGAAAGAGAGAGATRRVTVTTLRGKHRRGEPITVVTAYDYPSAVHVDSAGIDVCLVGDSAAMVVHGHDTTLPISLDVMLEHCRAVARGATRPLLVGDLPFGCYESSSTRAVDSAVRVLKEGGMDAIKLEGGAPSRISAAKAIVEAGIAVMGHVGLTPQAISVLGGFRPQGKTVDSAVKVVETALALQEAGCFSVVLECVPAPVAAAATSALQIPTIGIGAGPFCSGQVLVYHDLLGMMQHPHHAKVTPKFCKQFGNVGHVINKALSEYKQEVETRSFPGPSHTPYKIAAADVDGFANALQKMGLDEAANAAAAAAENAEKDGELPENK.

The N-terminal 59 residues, methionine 1–arginine 59, are a transit peptide targeting the mitochondrion. Mg(2+) contacts are provided by aspartate 94 and aspartate 133. 3-methyl-2-oxobutanoate-binding positions include aspartate 94 to serine 95, aspartate 133, and lysine 163. Glutamate 165 is a Mg(2+) binding site. The Proton acceptor role is filled by glutamate 233.

Belongs to the PanB family. The cofactor is Mg(2+).

It is found in the mitochondrion. It catalyses the reaction 3-methyl-2-oxobutanoate + (6R)-5,10-methylene-5,6,7,8-tetrahydrofolate + H2O = 2-dehydropantoate + (6S)-5,6,7,8-tetrahydrofolate. It participates in cofactor biosynthesis; (R)-pantothenate biosynthesis; (R)-pantoate from 3-methyl-2-oxobutanoate: step 1/2. In terms of biological role, catalyzes the reversible reaction in which hydroxymethyl group from 5,10-methylenetetrahydrofolate is transferred onto alpha-ketoisovalerate to form ketopantoate. The polypeptide is 3-methyl-2-oxobutanoate hydroxymethyltransferase 1, mitochondrial (KPHMT1) (Oryza sativa subsp. japonica (Rice)).